A 623-amino-acid polypeptide reads, in one-letter code: Leucine aminopeptidase 2 (623 aa).

Residues 140–142 (QLE) and 266–271 (PYGGME) each bind a peptide. His295 serves as a coordination point for Zn(2+). The Proton acceptor role is filled by Glu296. Zn(2+) is bound by residues His299 and Glu318. Tyr382 serves as the catalytic Proton donor.

Belongs to the peptidase M1 family. It depends on Zn(2+) as a cofactor.

It is found in the cytoplasm. Its subcellular location is the nucleus. It carries out the reaction an epoxide + H2O = an ethanediol. In terms of biological role, aminopeptidase that preferentially cleaves di- and tripeptides. Also has low epoxide hydrolase activity (in vitro). Can hydrolyze the epoxide leukotriene LTA(4) but it forms preferentially 5,6-dihydroxy-7,9,11,14-eicosatetraenoic acid rather than the cytokine leukotriene B(4) as the product compared to the homologous mammalian enzyme (in vitro). This chain is Leucine aminopeptidase 2, found in Eremothecium gossypii (strain ATCC 10895 / CBS 109.51 / FGSC 9923 / NRRL Y-1056) (Yeast).